Consider the following 210-residue polypeptide: MRKTKTEALKTKEHLMLAALETFYRKGIARTSLNEIAQAAGVTRGALYWHFKNKEDLFDALFQRICDDIENCIAQDAADAEGGSWTVFRHTLLHFFERLQSNDIHYKFHNILFLKCEHTEQNAAVIAIARKHQAIWREKITAVLTEAVENQDLADDLDKETAVIFIKSTLDGLIWRWFSSGESFDLGKTAPRIIGIMMDNLENHPCLRRK.

The 61-residue stretch at Leu9–Ile69 folds into the HTH tetR-type domain. Residues Ser32–Phe51 constitute a DNA-binding region (H-T-H motif).

As to quaternary structure, homodimer. Binds to DNA as a pair of dimers.

With respect to regulation, DNA binding is affected significantly by increasing the NaCl concentration. Controls the permeability of the cell envelope to hydrophobic compounds such as antibiotics and detergents. Represses transcription of the mtrCDE-encoded efflux pump by binding within the mtrCDE promoter. Also negatively regulates the expression of farR, by binding to its promoter region, leading indirectly to the positive regulation of expression of the farAB-encoded efflux pump. The polypeptide is HTH-type transcriptional regulator MtrR (Neisseria gonorrhoeae).